The chain runs to 502 residues: Smr domain-containing protein C1235.03 (502 aa).

A disordered region spans residues 150-184; that stretch reads LITSNIGHRSRQRKKKTKKATNSRKPLSKFQSNTE. The segment covering 157–171 has biased composition (basic residues); sequence HRSRQRKKKTKKATN. In terms of domain architecture, Smr spans 411-459; the sequence is SLDLHGATVREAKTIVRERVAAWWAKEADTSPNSIRPFVIVTGRGNHSI.

It localises to the nucleus. Its subcellular location is the nucleolus. The polypeptide is Smr domain-containing protein C1235.03 (Schizosaccharomyces pombe (strain 972 / ATCC 24843) (Fission yeast)).